Consider the following 203-residue polypeptide: Nucleoside triphosphate pyrophosphatase (203 aa).

The active-site Proton acceptor is the D78.

The protein belongs to the Maf family. It depends on a divalent metal cation as a cofactor.

It localises to the cytoplasm. It catalyses the reaction a ribonucleoside 5'-triphosphate + H2O = a ribonucleoside 5'-phosphate + diphosphate + H(+). The catalysed reaction is a 2'-deoxyribonucleoside 5'-triphosphate + H2O = a 2'-deoxyribonucleoside 5'-phosphate + diphosphate + H(+). Functionally, nucleoside triphosphate pyrophosphatase. May have a dual role in cell division arrest and in preventing the incorporation of modified nucleotides into cellular nucleic acids. The chain is Nucleoside triphosphate pyrophosphatase from Prochlorococcus marinus (strain AS9601).